The primary structure comprises 141 residues: Hemoglobin subunit alpha (141 aa).

Residues 1-141 (VLSPADKTNV…VSTVLTSKYR (141 aa)) enclose the Globin domain. The residue at position 3 (S3) is a Phosphoserine. The residue at position 7 (K7) is an N6-succinyllysine. T8 carries the post-translational modification Phosphothreonine. K11 carries the N6-succinyllysine modification. K16 is subject to N6-acetyllysine; alternate. N6-succinyllysine; alternate is present on K16. A Phosphotyrosine modification is found at Y24. Phosphoserine is present on S35. At K40 the chain carries N6-succinyllysine. Residue S49 is modified to Phosphoserine. Position 58 (H58) interacts with O2. H87 lines the heme b pocket. Position 102 is a phosphoserine (S102). Position 108 is a phosphothreonine (T108). At S124 the chain carries Phosphoserine. T134 and T137 each carry phosphothreonine. S138 is modified (phosphoserine).

It belongs to the globin family. As to quaternary structure, heterotetramer of two alpha chains and two beta chains. As to expression, red blood cells.

Involved in oxygen transport from the lung to the various peripheral tissues. Functionally, hemopressin acts as an antagonist peptide of the cannabinoid receptor CNR1. Hemopressin-binding efficiently blocks cannabinoid receptor CNR1 and subsequent signaling. The protein is Hemoglobin subunit alpha (HBA) of Martes foina (Beech marten).